Reading from the N-terminus, the 1165-residue chain is Autophagy-related protein 11 (1165 aa).

Coiled coils occupy residues 239–304 (NKLN…YKNM) and 670–853 (DNIR…KQKK).

The protein belongs to the ATG11 family. Homodimer and potential homooligomers.

It is found in the preautophagosomal structure membrane. Its function is as follows. Plays an essential role in both non-selective and selective autophagy such as mitophagy. Recruits mitochondria for their selective degradation via autophagy (mitophagy) during starvation, through its interaction with ATG32. Works as scaffold proteins that recruit ATG proteins to the pre-autophagosome (PAS), the site of vesicle/autophagosome formation. Required for ATG9 anterograde transport from the mitochondria to the PAS. This Candida albicans (strain SC5314 / ATCC MYA-2876) (Yeast) protein is Autophagy-related protein 11.